The primary structure comprises 443 residues: Crh-like protein 2 (443 aa).

The N-terminal stretch at 1 to 20 is a signal peptide; it reads MVRIGSSLLLATLAATTVSA. A GH16 domain is found at 21–306; that stretch reads ASDPPKCSQD…TVECYDPPSG (286 aa). A disulfide bond links cysteine 56 and cysteine 67. The Nucleophile role is filled by glutamate 164. The active-site Proton donor is the glutamate 168. Residue glutamate 168 participates in chitin binding. Asparagine 194 and asparagine 237 each carry an N-linked (GlcNAc...) asparagine glycan. Residues tryptophan 257 and threonine 268 each contribute to the chitin site. N-linked (GlcNAc...) asparagine glycans are attached at residues asparagine 332 and asparagine 359. Low complexity-rich tracts occupy residues 350-367 and 378-410; these read ASSSASGSANKTSSSANT and EPGNSHSGSSGSGTSTSDGSGSSTGFSQGSETS. A disordered region spans residues 350–420; it reads ASSSASGSAN…ASSNKNAAPS (71 aa). A compositionally biased stretch (polar residues) spans 411–420; sequence ASSNKNAAPS. A lipid anchor (GPI-like-anchor amidated asparagine) is attached at asparagine 416. Residues 417-443 constitute a propeptide, removed in mature form; the sequence is AAPSQNERVLNGSFFAVLVAVVALVTL. N-linked (GlcNAc...) asparagine glycosylation occurs at asparagine 427.

The protein belongs to the glycosyl hydrolase 16 family. CRH1 subfamily. In terms of processing, the GPI-like anchor contains a phosphoceramide lipid group. The anchor position has not been determined.

The protein localises to the cell membrane. The protein resides in the secreted. It is found in the cell wall. It catalyses the reaction Random endo-hydrolysis of N-acetyl-beta-D-glucosaminide (1-&gt;4)-beta-linkages in chitin and chitodextrins.. Its function is as follows. Dual chitinase/transglycosylase that plays a role in cell wall architecture. Chitinase and transglycosylase activities are coupled. Required for the polysaccharide cross-linking at the septa and the cell wall. More specifically, transfers chitin to 1,6-beta-glucan in the cell wall. This is Crh-like protein 2 from Aspergillus fumigatus (strain ATCC MYA-4609 / CBS 101355 / FGSC A1100 / Af293) (Neosartorya fumigata).